The chain runs to 32 residues: MSDIN-like toxin proprotein a (32 aa).

A propeptide spanning residues 1–10 is cleaved from the precursor; it reads MSDINATRLP. The cyclopeptide (Ile-Pro) cross-link spans 11–18; it reads IIGILLPP. The propeptide occupies 19–32; it reads CIGDDVTLLLTRGE.

The protein belongs to the MSDIN fungal toxin family. Post-translationally, processed by the macrocyclase-peptidase enzyme POPB to yield a toxic cyclic octapeptide. POPB first removes 10 residues from the N-terminus. Conformational trapping of the remaining peptide forces the enzyme to release this intermediate rather than proceed to macrocyclization. The enzyme rebinds the remaining peptide in a different conformation and catalyzes macrocyclization of the N-terminal 8 residues.

Its function is as follows. Probable toxin that belongs to the MSDIN-like toxin family responsible for a large number of food poisoning cases and deaths. The sequence is that of MSDIN-like toxin proprotein a from Amanita phalloides (Death cap).